A 241-amino-acid chain; its full sequence is Leucyl/phenylalanyl-tRNA--protein transferase (241 aa).

Belongs to the L/F-transferase family.

The protein localises to the cytoplasm. The enzyme catalyses N-terminal L-lysyl-[protein] + L-leucyl-tRNA(Leu) = N-terminal L-leucyl-L-lysyl-[protein] + tRNA(Leu) + H(+). It carries out the reaction N-terminal L-arginyl-[protein] + L-leucyl-tRNA(Leu) = N-terminal L-leucyl-L-arginyl-[protein] + tRNA(Leu) + H(+). It catalyses the reaction L-phenylalanyl-tRNA(Phe) + an N-terminal L-alpha-aminoacyl-[protein] = an N-terminal L-phenylalanyl-L-alpha-aminoacyl-[protein] + tRNA(Phe). Its function is as follows. Functions in the N-end rule pathway of protein degradation where it conjugates Leu, Phe and, less efficiently, Met from aminoacyl-tRNAs to the N-termini of proteins containing an N-terminal arginine or lysine. The chain is Leucyl/phenylalanyl-tRNA--protein transferase from Neisseria meningitidis serogroup C (strain 053442).